Here is a 396-residue protein sequence, read N- to C-terminus: Tryptophan synthase beta chain (396 aa).

Lysine 86 bears the N6-(pyridoxal phosphate)lysine mark.

The protein belongs to the TrpB family. In terms of assembly, tetramer of two alpha and two beta chains. Requires pyridoxal 5'-phosphate as cofactor.

The catalysed reaction is (1S,2R)-1-C-(indol-3-yl)glycerol 3-phosphate + L-serine = D-glyceraldehyde 3-phosphate + L-tryptophan + H2O. Its pathway is amino-acid biosynthesis; L-tryptophan biosynthesis; L-tryptophan from chorismate: step 5/5. The beta subunit is responsible for the synthesis of L-tryptophan from indole and L-serine. This Blochmanniella pennsylvanica (strain BPEN) protein is Tryptophan synthase beta chain.